Reading from the N-terminus, the 70-residue chain is Uteroglobin (70 aa).

The protein belongs to the secretoglobin family. In terms of assembly, antiparallel homodimer; disulfide-linked. Interaction with LMBR1L is controversial. In terms of tissue distribution, club cells (nonciliated cells of the surface epithelium of the pulmonary airways).

It is found in the secreted. Its function is as follows. Binds phosphatidylcholine, phosphatidylinositol, polychlorinated biphenyls (PCB) and weakly progesterone, potent inhibitor of phospholipase A2. The protein is Uteroglobin (SCGB1A1) of Macaca fuscata fuscata (Japanese macaque).